The chain runs to 283 residues: Peroxisomal protein 2 (283 aa).

Residues 281 to 283 carry the Peroxisomal target signal 1 (PTS1) motif; the sequence is VKL.

The protein belongs to the PXP2 family.

The protein resides in the peroxisome matrix. It localises to the cytoplasm. The protein localises to the cytosol. Functionally, probably involved in peroxisome formation or maintenance as well as in amino acid metabolism. The protein is Peroxisomal protein 2 of Saccharomyces cerevisiae (strain ATCC 204508 / S288c) (Baker's yeast).